A 214-amino-acid polypeptide reads, in one-letter code: Small ribosomal subunit protein uS2 (214 aa).

Belongs to the universal ribosomal protein uS2 family.

This Methanococcoides burtonii (strain DSM 6242 / NBRC 107633 / OCM 468 / ACE-M) protein is Small ribosomal subunit protein uS2.